The chain runs to 134 residues: Complexin-1 (134 aa).

The disordered stretch occupies residues 1–112 (MEFVMKQALG…PGCGDAAEEE (112 aa)). A compositionally biased stretch (basic and acidic residues) spans 15-81 (DMGKMLGGDE…IKKKEEREAE (67 aa)). Residues 29-69 (DAAKKEEERQEALRQEEEERKAKYAKMEAEREAVRQGIRDK) are a coiled coil. The interval 48–70 (RKAKYAKMEAEREAVRQGIRDKY) is interaction with the SNARE complex.

Belongs to the complexin/synaphin family. As to quaternary structure, binds to the SNARE core complex containing SNAP25, VAMP2 and STX1A.

The protein localises to the cytoplasm. It localises to the cytosol. Its subcellular location is the perikaryon. It is found in the presynapse. Its function is as follows. Positively regulates a late step in synaptic vesicle exocytosis. Organizes the SNAREs into a cross-linked zigzag topology that, when interposed between the vesicle and plasma membranes, is incompatible with fusion, thereby preventing SNAREs from releasing neurotransmitters until an action potential arrives at the synapse. Also involved in glucose-induced secretion of insulin by pancreatic beta-cells. The protein is Complexin-1 (CPLX1) of Bos taurus (Bovine).